Here is a 369-residue protein sequence, read N- to C-terminus: DNA replication and repair protein RecF (369 aa).

An ATP-binding site is contributed by 30-37 (GDNAQGKT).

Belongs to the RecF family.

The protein localises to the cytoplasm. The RecF protein is involved in DNA metabolism; it is required for DNA replication and normal SOS inducibility. RecF binds preferentially to single-stranded, linear DNA. It also seems to bind ATP. This is DNA replication and repair protein RecF from Streptococcus equi subsp. equi (strain 4047).